Reading from the N-terminus, the 106-residue chain is UPF0145 protein NE1032 (106 aa).

Belongs to the UPF0145 family.

This is UPF0145 protein NE1032 from Nitrosomonas europaea (strain ATCC 19718 / CIP 103999 / KCTC 2705 / NBRC 14298).